The sequence spans 151 residues: Ribosome maturation factor RimP (151 aa).

This sequence belongs to the RimP family.

The protein resides in the cytoplasm. In terms of biological role, required for maturation of 30S ribosomal subunits. The sequence is that of Ribosome maturation factor RimP from Colwellia psychrerythraea (strain 34H / ATCC BAA-681) (Vibrio psychroerythus).